The sequence spans 116 residues: Ribonuclease P protein component (116 aa).

It belongs to the RnpA family. As to quaternary structure, consists of a catalytic RNA component (M1 or rnpB) and a protein subunit.

The catalysed reaction is Endonucleolytic cleavage of RNA, removing 5'-extranucleotides from tRNA precursor.. Its function is as follows. RNaseP catalyzes the removal of the 5'-leader sequence from pre-tRNA to produce the mature 5'-terminus. It can also cleave other RNA substrates such as 4.5S RNA. The protein component plays an auxiliary but essential role in vivo by binding to the 5'-leader sequence and broadening the substrate specificity of the ribozyme. This Acholeplasma laidlawii (strain PG-8A) protein is Ribonuclease P protein component.